Here is a 256-residue protein sequence, read N- to C-terminus: Large ribosomal subunit protein eL8B (256 aa).

The tract at residues 1-37 (MAPGKKVAPAPFGAKSTKSNKAKNPLTHSTPKNFGIG) is disordered.

Belongs to the eukaryotic ribosomal protein eL8 family. As to quaternary structure, component of the large ribosomal subunit (LSU). Mature yeast ribosomes consist of a small (40S) and a large (60S) subunit. The 40S small subunit contains 1 molecule of ribosomal RNA (18S rRNA) and 33 different proteins (encoded by 57 genes). The large 60S subunit contains 3 rRNA molecules (25S, 5.8S and 5S rRNA) and 46 different proteins (encoded by 81 genes).

It localises to the cytoplasm. Component of the ribosome, a large ribonucleoprotein complex responsible for the synthesis of proteins in the cell. The small ribosomal subunit (SSU) binds messenger RNAs (mRNAs) and translates the encoded message by selecting cognate aminoacyl-transfer RNA (tRNA) molecules. The large subunit (LSU) contains the ribosomal catalytic site termed the peptidyl transferase center (PTC), which catalyzes the formation of peptide bonds, thereby polymerizing the amino acids delivered by tRNAs into a polypeptide chain. The nascent polypeptides leave the ribosome through a tunnel in the LSU and interact with protein factors that function in enzymatic processing, targeting, and the membrane insertion of nascent chains at the exit of the ribosomal tunnel. This Saccharomyces cerevisiae (strain ATCC 204508 / S288c) (Baker's yeast) protein is Large ribosomal subunit protein eL8B.